Here is a 410-residue protein sequence, read N- to C-terminus: MKQELIERFTRYVKIDTQSNEESHTVPTTPGQIEFGKLLVEELKEIGLTEVTMDDNGYVMATLPANTDKDVPVIGFLAHLDTATDFTGKNVKPQIHENFDGNAITLNEELNVVLTPEQFPELPSYKGHTIITTDGTTLLGADDKAGLTEIMVAMNYLVHNPQIKHGKIRVAFTPDEEIGRGPAHFDVEAFGASFAYTMDGGPLGGLEYESFNAAGAKLTFNGTNTHPGTAKNKMRNATKLAMEFNGYLPVEEAPEYTEGYEGFYHLLSLNGDVEQSKAYYIIRDFDRENFEARKHNVENIVKQMQEKYGQDAVVLEMNDQYYNMLEKIEPVREIVDIAYEAMKSLNIEPNIHPIRGGTDGSQLSYMGLPTPNIFTGGENYHGKFEYVSVDVMEKAVQVIVEIARRFEEQA.

His79 is a Zn(2+) binding site. The active site involves Asp81. Zn(2+) is bound at residue Asp142. The Proton acceptor role is filled by Glu176. Zn(2+) is bound by residues Glu177, Asp199, and His381.

This sequence belongs to the peptidase M20B family. Requires Zn(2+) as cofactor.

It localises to the cytoplasm. The catalysed reaction is Release of the N-terminal residue from a tripeptide.. In terms of biological role, cleaves the N-terminal amino acid of tripeptides. In Bacillus cereus (strain ATCC 10987 / NRS 248), this protein is Peptidase T.